Consider the following 134-residue polypeptide: Profilin-2 (134 aa).

Cysteines 13 and 118 form a disulfide. The Involved in PIP2 interaction motif lies at 84-100 (AVIRGKKGSGGITIKKT). Threonine 114 bears the Phosphothreonine mark.

This sequence belongs to the profilin family. Occurs in many kinds of cells as a complex with monomeric actin in a 1:1 ratio. In terms of processing, phosphorylated by MAP kinases.

The protein resides in the cytoplasm. It is found in the cytoskeleton. Binds to actin and affects the structure of the cytoskeleton. At high concentrations, profilin prevents the polymerization of actin, whereas it enhances it at low concentrations. The protein is Profilin-2 of Olea europaea (Common olive).